We begin with the raw amino-acid sequence, 306 residues long: Ornithine carbamoyltransferase (306 aa).

Carbamoyl phosphate-binding positions include 46–49 (STRT), Gln73, Arg97, and 124–127 (HPTQ). Residues Asn156, Asp220, and 224–225 (SM) each bind L-ornithine. Carbamoyl phosphate is bound by residues 260–261 (CL) and Arg288.

Belongs to the aspartate/ornithine carbamoyltransferase superfamily. OTCase family.

The protein resides in the cytoplasm. The enzyme catalyses carbamoyl phosphate + L-ornithine = L-citrulline + phosphate + H(+). It functions in the pathway amino-acid biosynthesis; L-arginine biosynthesis; L-arginine from L-ornithine and carbamoyl phosphate: step 1/3. Its function is as follows. Reversibly catalyzes the transfer of the carbamoyl group from carbamoyl phosphate (CP) to the N(epsilon) atom of ornithine (ORN) to produce L-citrulline. This Campylobacter jejuni (strain RM1221) protein is Ornithine carbamoyltransferase.